The primary structure comprises 388 residues: Leucine aminopeptidase 1 (388 aa).

Residues 1-19 (MKSLSLLALAAIAPPAAVA) form the signal peptide. Residues 20 to 88 (AVVDHQVPFE…SVKSHERIQV (69 aa)) constitute a propeptide that is removed on maturation. Asn-180 is a glycosylation site (N-linked (GlcNAc...) asparagine). The Zn(2+) site is built by His-188, Asp-207, Glu-246, and Asp-273. A disulfide bridge links Cys-322 with Cys-326. His-355 contacts Zn(2+).

It belongs to the peptidase M28 family. M28E subfamily. As to quaternary structure, monomer. Zn(2+) is required as a cofactor.

The protein localises to the secreted. Functionally, extracellular aminopeptidase that allows assimilation of proteinaceous substrates. The protein is Leucine aminopeptidase 1 (LAP1) of Coccidioides posadasii (strain RMSCC 757 / Silveira) (Valley fever fungus).